A 146-amino-acid polypeptide reads, in one-letter code: D-aminoacyl-tRNA deacylase (146 aa).

Residues 137–138 (GP) carry the Gly-cisPro motif, important for rejection of L-amino acids motif.

This sequence belongs to the DTD family. In terms of assembly, homodimer.

Its subcellular location is the cytoplasm. The enzyme catalyses glycyl-tRNA(Ala) + H2O = tRNA(Ala) + glycine + H(+). It carries out the reaction a D-aminoacyl-tRNA + H2O = a tRNA + a D-alpha-amino acid + H(+). Functionally, an aminoacyl-tRNA editing enzyme that deacylates mischarged D-aminoacyl-tRNAs. Also deacylates mischarged glycyl-tRNA(Ala), protecting cells against glycine mischarging by AlaRS. Acts via tRNA-based rather than protein-based catalysis; rejects L-amino acids rather than detecting D-amino acids in the active site. By recycling D-aminoacyl-tRNA to D-amino acids and free tRNA molecules, this enzyme counteracts the toxicity associated with the formation of D-aminoacyl-tRNA entities in vivo and helps enforce protein L-homochirality. The sequence is that of D-aminoacyl-tRNA deacylase from Anoxybacillus flavithermus (strain DSM 21510 / WK1).